Reading from the N-terminus, the 79-residue chain is uncharacterized protein (79 aa).

The protein resides in the mitochondrion. This is an uncharacterized protein from Oenothera berteroana (Bertero's evening primrose).